The primary structure comprises 374 residues: Hydroxylysine kinase (374 aa).

The active-site Proton acceptor is the Asp-228.

Belongs to the aminoglycoside phosphotransferase family.

The protein resides in the cytoplasm. The catalysed reaction is (5R)-5-hydroxy-L-lysine + GTP = (5R)-5-phosphooxy-L-lysine + GDP + H(+). Functionally, catalyzes the GTP-dependent phosphorylation of 5-hydroxy-L-lysine. This Xenopus laevis (African clawed frog) protein is Hydroxylysine kinase (hykk).